The sequence spans 210 residues: Probable nicotinate-nucleotide adenylyltransferase (210 aa).

This sequence belongs to the NadD family.

It carries out the reaction nicotinate beta-D-ribonucleotide + ATP + H(+) = deamido-NAD(+) + diphosphate. Its pathway is cofactor biosynthesis; NAD(+) biosynthesis; deamido-NAD(+) from nicotinate D-ribonucleotide: step 1/1. In terms of biological role, catalyzes the reversible adenylation of nicotinate mononucleotide (NaMN) to nicotinic acid adenine dinucleotide (NaAD). The chain is Probable nicotinate-nucleotide adenylyltransferase from Streptococcus pyogenes serotype M1.